The sequence spans 153 residues: MAVPGCNKDNVRAGCRKCGYPGHLTFECRNFLRVDPKRDIVLDVSSTSSEDSDEESEELNKLQALQEKRINEEEEKKKEKSREKIKLKKKRKRSNSSTTEEDSSKQKKQKYQKKEKKKEKKNKSKKGKHHKKEKKKRKKEKRSSPNRSEVTKK.

The CCHC-type zinc-finger motif lies at 13–30 (AGCRKCGYPGHLTFECRN). The disordered stretch occupies residues 44–153 (VSSTSSEDSD…SPNRSEVTKK (110 aa)). Ser-52 is modified (phosphoserine). The segment covering 66–84 (QEKRINEEEEKKKEKSREK) has biased composition (basic and acidic residues). Basic residues predominate over residues 85–94 (IKLKKKRKRS). Residues Ser-96 and Ser-97 each carry the phosphoserine modification. The segment covering 106–141 (QKKQKYQKKEKKKEKKNKSKKGKHHKKEKKKRKKEK) has biased composition (basic residues).

In terms of assembly, interacts with SREK1/SFRS12.

Possible splicing regulator involved in the control of cellular survival. In Rattus norvegicus (Rat), this protein is Protein SREK1IP1 (Srek1ip1).